Here is a 20-residue protein sequence, read N- to C-terminus: Toxin TpF21-Cocle (20 aa).

One can recognise an LCN-type CS-alpha/beta domain in the interval 1–20 (KDGYLVGNDGCKYSCNTYPK).

Belongs to the long (4 C-C) scorpion toxin superfamily. Sodium channel inhibitor family. Beta subfamily. Expressed by the venom gland.

Its subcellular location is the secreted. Its function is as follows. Beta toxins bind voltage-independently at site-4 of sodium channels (Nav) and shift the voltage of activation toward more negative potentials thereby affecting sodium channel activation and promoting spontaneous and repetitive firing. This chain is Toxin TpF21-Cocle, found in Tityus pachyurus (Colombian scorpion).